A 326-amino-acid chain; its full sequence is Ras association domain-containing protein 2 (326 aa).

Residues 111-133 (EVDAPPEGDQMPSSTDSRGLKPL) form a disordered region. A Ras-associating domain is found at 176–264 (YNHKTSVFTP…SKVFLMEKDQ (89 aa)). Positions 272-319 (VAQYIKFEMPVLKSFIQKLQEEEDREVKKLMRKYTVLRLMIRQRLEEI) constitute an SARAH domain.

As to quaternary structure, interacts directly with activated KRAS in a GTP-dependent manner. Interacts (via SARAH domain) with STK3/MST2 and STK4/MST1. Post-translationally, phosphorylated by STK3/MST2 and STK4/MST1. As to expression, widely expressed with highest levels in brain, placenta, peripheral blood and lung. Frequently down-regulated in lung tumor cell lines.

It is found in the nucleus. Its subcellular location is the cytoplasm. The protein resides in the chromosome. The protein localises to the centromere. It localises to the kinetochore. In terms of biological role, potential tumor suppressor. Acts as a KRAS-specific effector protein. May promote apoptosis and cell cycle arrest. Stabilizes STK3/MST2 by protecting it from proteasomal degradation. The polypeptide is Ras association domain-containing protein 2 (RASSF2) (Homo sapiens (Human)).